The sequence spans 196 residues: 3-isopropylmalate dehydratase small subunit (196 aa).

Belongs to the LeuD family. LeuD type 1 subfamily. Heterodimer of LeuC and LeuD.

The catalysed reaction is (2R,3S)-3-isopropylmalate = (2S)-2-isopropylmalate. It functions in the pathway amino-acid biosynthesis; L-leucine biosynthesis; L-leucine from 3-methyl-2-oxobutanoate: step 2/4. In terms of biological role, catalyzes the isomerization between 2-isopropylmalate and 3-isopropylmalate, via the formation of 2-isopropylmaleate. The polypeptide is 3-isopropylmalate dehydratase small subunit (Corynebacterium aurimucosum (strain ATCC 700975 / DSM 44827 / CIP 107346 / CN-1) (Corynebacterium nigricans)).